The sequence spans 229 residues: Adenylate kinase 1 (229 aa).

42–47 (GCGKGT) lines the ATP pocket. The residue at position 62 (serine 62) is a Phosphoserine. Residues serine 63, arginine 68, 118–121 (GYPR), and glutamine 125 contribute to the AMP site. Arginine 156 is a binding site for ATP. AMP contacts are provided by arginine 164 and arginine 175.

The protein belongs to the adenylate kinase family. AK1 subfamily. As to expression, high expression levels in the thorax, suggesting a possible function in the gastrointestinal or reproductive systems.

The protein resides in the cytoplasm. It carries out the reaction AMP + ATP = 2 ADP. Its function is as follows. Catalyzes the reversible transfer of the terminal phosphate group between ATP and AMP. Plays an important role in cellular energy homeostasis and in adenine nucleotide metabolism. The sequence is that of Adenylate kinase 1 from Drosophila melanogaster (Fruit fly).